Reading from the N-terminus, the 310-residue chain is Retrotransposon Gag-like protein 4 (310 aa).

The segment at 278–295 (QLCLYCSQSGHFTRDCLA) adopts a CCHC-type zinc-finger fold.

Functionally, involved in cognitive function in the brain, possibly via the noradrenergic system. The chain is Retrotransposon Gag-like protein 4 from Homo sapiens (Human).